The primary structure comprises 419 residues: UDP-N-acetylglucosamine 1-carboxyvinyltransferase 2 (419 aa).

24–25 contacts phosphoenolpyruvate; it reads KN. Position 94 (Arg-94) interacts with UDP-N-acetyl-alpha-D-glucosamine. The Proton donor role is filled by Cys-118. Cys-118 bears the 2-(S-cysteinyl)pyruvic acid O-phosphothioketal mark. UDP-N-acetyl-alpha-D-glucosamine contacts are provided by residues 123–127, Asp-307, and Ile-329; that span reads RPIDQ.

Belongs to the EPSP synthase family. MurA subfamily.

It localises to the cytoplasm. The catalysed reaction is phosphoenolpyruvate + UDP-N-acetyl-alpha-D-glucosamine = UDP-N-acetyl-3-O-(1-carboxyvinyl)-alpha-D-glucosamine + phosphate. It functions in the pathway cell wall biogenesis; peptidoglycan biosynthesis. In terms of biological role, cell wall formation. Adds enolpyruvyl to UDP-N-acetylglucosamine. This is UDP-N-acetylglucosamine 1-carboxyvinyltransferase 2 from Staphylococcus epidermidis (strain ATCC 12228 / FDA PCI 1200).